The chain runs to 279 residues: Methyltransferase prhM (279 aa).

S-adenosyl-L-methionine contacts are provided by residues 124 to 125 (DI) and 152 to 153 (DV).

This sequence belongs to the class I-like SAM-binding methyltransferase superfamily.

It functions in the pathway secondary metabolite biosynthesis; terpenoid biosynthesis. In terms of biological role, methyltransferase; part of the gene cluster that mediates the biosynthesis of paraherquonin, a meroterpenoid with a unique, highly congested hexacyclic molecular architecture. The first step of the pathway is the synthesis of 3,5-dimethylorsellinic acid (DMOA) by the polyketide synthase prhL. Synthesis of DMOA is followed by farnesylation by the prenyltransferase prhE, methylesterification by the methyl-transferase prhM, epoxidation of the prenyl chain by the flavin-dependent monooxygenase prhF, and cyclization of the farnesyl moiety by the terpene cyclase prhH, to yield the tetracyclic intermediate, protoaustinoid A. The short chain dehydrogenase prhI then oxidizes the C-3 alcohol group of the terpene cyclase product to transform protoaustinoid A into protoaustinoid B. The FAD-binding monooxygenase prhJ catalyzes the oxidation of protoaustinoid B into preaustinoid A which is further oxidized into preaustinoid A1 by FAD-binding monooxygenase phrK. Finally, prhA leads to berkeleydione via the berkeleyone B intermediate. PrhA is a multifunctional dioxygenase that first desaturates at C5-C6 to form berkeleyone B, followed by rearrangement of the A/B-ring to form the cycloheptadiene moiety in berkeleydione. Berkeleydione serves as the key intermediate for the biosynthesis of paraherquonin as well as many other meroterpenoids. The cytochrome P450 monooxygenases prhB, prhD, and prhN, as well as the isomerase prhC, are probably involved in the late stage of paraherquonin biosynthesis, after the production of berkeleydione. Especially prhC might be a multifunctional enzyme that catalyzes the D-ring expansion via intramolecular methoxy rearrangement, as well as the hydrolysis of the expanded D-ring. The protein is Methyltransferase prhM of Penicillium brasilianum.